The following is a 495-amino-acid chain: Trigger factor (495 aa).

The 86-residue stretch at Gly-169–Val-254 folds into the PPIase FKBP-type domain. Positions Ala-439–Glu-495 are disordered.

It belongs to the FKBP-type PPIase family. Tig subfamily.

Its subcellular location is the cytoplasm. The catalysed reaction is [protein]-peptidylproline (omega=180) = [protein]-peptidylproline (omega=0). Involved in protein export. Acts as a chaperone by maintaining the newly synthesized protein in an open conformation. Functions as a peptidyl-prolyl cis-trans isomerase. This is Trigger factor from Rhizobium rhizogenes (strain K84 / ATCC BAA-868) (Agrobacterium radiobacter).